We begin with the raw amino-acid sequence, 380 residues long: Phospho-N-acetylmuramoyl-pentapeptide-transferase (380 aa).

A run of 11 helical transmembrane segments spans residues 26–46, 75–95, 98–118, 135–155, 161–181, 183–203, 222–242, 259–279, 283–303, 311–331, and 357–377; these read IVAA…IFIE, MGGA…ADLA, FVWA…TDDW, LVLQ…DWRF, FPWV…FVPS, LFNP…VIAT, VVSA…IAGF, LGVF…YNTY, VFMG…MAVL, AILH…VWSF, and KIIV…LLSI.

It belongs to the glycosyltransferase 4 family. MraY subfamily. It depends on Mg(2+) as a cofactor.

The protein resides in the cell inner membrane. It catalyses the reaction UDP-N-acetyl-alpha-D-muramoyl-L-alanyl-gamma-D-glutamyl-meso-2,6-diaminopimeloyl-D-alanyl-D-alanine + di-trans,octa-cis-undecaprenyl phosphate = di-trans,octa-cis-undecaprenyl diphospho-N-acetyl-alpha-D-muramoyl-L-alanyl-D-glutamyl-meso-2,6-diaminopimeloyl-D-alanyl-D-alanine + UMP. It participates in cell wall biogenesis; peptidoglycan biosynthesis. In terms of biological role, catalyzes the initial step of the lipid cycle reactions in the biosynthesis of the cell wall peptidoglycan: transfers peptidoglycan precursor phospho-MurNAc-pentapeptide from UDP-MurNAc-pentapeptide onto the lipid carrier undecaprenyl phosphate, yielding undecaprenyl-pyrophosphoryl-MurNAc-pentapeptide, known as lipid I. In Anaeromyxobacter dehalogenans (strain 2CP-1 / ATCC BAA-258), this protein is Phospho-N-acetylmuramoyl-pentapeptide-transferase.